The sequence spans 201 residues: Oxalate oxidase 1 (201 aa).

Cys-10 and Cys-26 are disulfide-bonded. The Cupin type-1 domain occupies 40-191; sequence SKLTKAGNTS…ALRVEAGVVE (152 aa). N-linked (GlcNAc...) asparagine glycosylation occurs at Asn-47. 2 residues coordinate oxalate: Asn-75 and Asn-85. Mn(2+) contacts are provided by His-88, His-90, Glu-95, and His-137. Residues His-90 and Glu-95 each coordinate oxalate.

It belongs to the germin family. As to quaternary structure, homo hexamer; a trimer of dimers. Post-translationally, glycosylated. A form called G contains antennary GlcNAc residues, whereas a form called G' lacks antennary GlcNAc residues in its otherwise identical glycans.

Its subcellular location is the secreted. The protein resides in the extracellular space. It is found in the apoplast. The protein localises to the cell wall. The catalysed reaction is oxalate + O2 + 2 H(+) = H2O2 + 2 CO2. In terms of biological role, releases hydrogen peroxide in the apoplast which may be important for cross-linking reactions in the cell wall biochemistry. May play an important role in several aspects of plant growth and defense mechanisms. This is Oxalate oxidase 1 from Hordeum vulgare (Barley).